A 179-amino-acid polypeptide reads, in one-letter code: Large ribosomal subunit protein uL5 (179 aa).

The protein belongs to the universal ribosomal protein uL5 family. Part of the 50S ribosomal subunit; part of the 5S rRNA/L5/L18/L25 subcomplex. Contacts the 5S rRNA and the P site tRNA. Forms a bridge to the 30S subunit in the 70S ribosome.

In terms of biological role, this is one of the proteins that bind and probably mediate the attachment of the 5S RNA into the large ribosomal subunit, where it forms part of the central protuberance. In the 70S ribosome it contacts protein S13 of the 30S subunit (bridge B1b), connecting the 2 subunits; this bridge is implicated in subunit movement. Contacts the P site tRNA; the 5S rRNA and some of its associated proteins might help stabilize positioning of ribosome-bound tRNAs. The protein is Large ribosomal subunit protein uL5 of Microcystis aeruginosa (strain NIES-843 / IAM M-2473).